Reading from the N-terminus, the 327-residue chain is DNA-directed RNA polymerase subunit alpha (327 aa).

Residues 1 to 233 (MVREKVKVST…NLFIPFLHVE (233 aa)) form an alpha N-terminal domain (alpha-NTD) region. Residues 267-327 (LAFQYIFIDQ…KKILDILEKK (61 aa)) are alpha C-terminal domain (alpha-CTD).

This sequence belongs to the RNA polymerase alpha chain family. In terms of assembly, in plastids the minimal PEP RNA polymerase catalytic core is composed of four subunits: alpha, beta, beta', and beta''. When a (nuclear-encoded) sigma factor is associated with the core the holoenzyme is formed, which can initiate transcription.

The protein resides in the plastid. It is found in the chloroplast. It catalyses the reaction RNA(n) + a ribonucleoside 5'-triphosphate = RNA(n+1) + diphosphate. DNA-dependent RNA polymerase catalyzes the transcription of DNA into RNA using the four ribonucleoside triphosphates as substrates. The polypeptide is DNA-directed RNA polymerase subunit alpha (Crucihimalaya wallichii (Rock-cress)).